The primary structure comprises 181 residues: Large ribosomal subunit protein uL5 (181 aa).

Belongs to the universal ribosomal protein uL5 family. In terms of assembly, part of the 50S ribosomal subunit; part of the 5S rRNA/L5/L18/L25 subcomplex. Contacts the 5S rRNA and the P site tRNA. Forms a bridge to the 30S subunit in the 70S ribosome.

Functionally, this is one of the proteins that bind and probably mediate the attachment of the 5S RNA into the large ribosomal subunit, where it forms part of the central protuberance. In the 70S ribosome it contacts protein S13 of the 30S subunit (bridge B1b), connecting the 2 subunits; this bridge is implicated in subunit movement. Contacts the P site tRNA; the 5S rRNA and some of its associated proteins might help stabilize positioning of ribosome-bound tRNAs. This is Large ribosomal subunit protein uL5 from Picosynechococcus sp. (strain ATCC 27264 / PCC 7002 / PR-6) (Agmenellum quadruplicatum).